Consider the following 208-residue polypeptide: uncharacterized protein (208 aa).

3 disordered regions span residues 91-115 (PGQA…PSQD), 127-156 (QSWS…KRPG), and 182-208 (NKLG…RKFK). The span at 127–136 (QSWSSGTSRP) shows a compositional bias: polar residues.

This is an uncharacterized protein from Rattus norvegicus (Rat).